The sequence spans 144 residues: 3-hydroxyacyl-[acyl-carrier-protein] dehydratase FabZ (144 aa).

His-48 is a catalytic residue.

The protein belongs to the thioester dehydratase family. FabZ subfamily.

Its subcellular location is the cytoplasm. The catalysed reaction is a (3R)-hydroxyacyl-[ACP] = a (2E)-enoyl-[ACP] + H2O. Involved in unsaturated fatty acids biosynthesis. Catalyzes the dehydration of short chain beta-hydroxyacyl-ACPs and long chain saturated and unsaturated beta-hydroxyacyl-ACPs. In Listeria welshimeri serovar 6b (strain ATCC 35897 / DSM 20650 / CCUG 15529 / CIP 8149 / NCTC 11857 / SLCC 5334 / V8), this protein is 3-hydroxyacyl-[acyl-carrier-protein] dehydratase FabZ.